Reading from the N-terminus, the 64-residue chain is Large ribosomal subunit protein bL35 (64 aa).

The segment covering 1-15 (MPKSKTHSGTAKRFK) has biased composition (basic residues). Residues 1–23 (MPKSKTHSGTAKRFKVSGSGKIL) are disordered.

This sequence belongs to the bacterial ribosomal protein bL35 family.

This is Large ribosomal subunit protein bL35 from Rhodococcus jostii (strain RHA1).